Here is a 129-residue protein sequence, read N- to C-terminus: D-ribose pyranase (129 aa).

The active-site Proton donor is the H20. Substrate is bound by residues D28, H96, and 118–120 (YAN).

Belongs to the RbsD / FucU family. RbsD subfamily. As to quaternary structure, homodecamer.

The protein resides in the cytoplasm. The enzyme catalyses beta-D-ribopyranose = beta-D-ribofuranose. It functions in the pathway carbohydrate metabolism; D-ribose degradation; D-ribose 5-phosphate from beta-D-ribopyranose: step 1/2. In terms of biological role, catalyzes the interconversion of beta-pyran and beta-furan forms of D-ribose. The sequence is that of D-ribose pyranase from Streptomyces coelicolor (strain ATCC BAA-471 / A3(2) / M145).